A 771-amino-acid chain; its full sequence is Dol-P-Glc:Glc(2)Man(9)GlcNAc(2)-PP-Dol alpha-1,2-glucosyltransferase (771 aa).

7 consecutive transmembrane segments (helical) span residues 45 to 65 (FITA…LALV), 160 to 180 (VSFY…IFFF), 182 to 202 (GLYY…WNHL), 221 to 241 (VVLG…VVVY), 293 to 313 (VDMA…IAAL), 326 to 346 (HITI…VVLG), and 357 to 377 (LPQM…LLIP). Positions 392-449 (TPTPSHTTTKDPGRSSWRFTKPSITSKKSSTTKPPQRSGPTPASSSSSSSSFSPDTNS) are disordered. Composition is skewed to low complexity over residues 411–426 (TKPS…TKPP) and 435–449 (SSSS…DTNS). N-linked (GlcNAc...) asparagine glycosylation occurs at N448. A run of 2 helical transmembrane segments spans residues 469 to 489 (PFYL…NTII) and 503 to 525 (YIFR…AYTL). A compositionally biased stretch (basic and acidic residues) spans 584 to 593 (QKNIKDKQKE). The segment at 584–605 (QKNIKDKQKEVEEEEEEEEKED) is disordered. Acidic residues predominate over residues 594-604 (VEEEEEEEEKE). 2 helical membrane-spanning segments follow: residues 631 to 651 (TSTV…APLV) and 656 to 676 (FILP…SSSL). Residues 682–708 (SSSFASSTTESGNGDGNDAATAARQQQ) form a disordered region. A helical membrane pass occupies residues 728 to 748 (LALETVWFLAINIGTMYMFLF).

This sequence belongs to the ALG10 glucosyltransferase family.

The protein resides in the endoplasmic reticulum membrane. It catalyses the reaction an alpha-D-Glc-(1-&gt;3)-alpha-D-Glc-(1-&gt;3)-alpha-D-Man-(1-&gt;2)-alpha-D-Man-(1-&gt;2)-alpha-D-Man-(1-&gt;3)-[alpha-D-Man-(1-&gt;2)-alpha-D-Man-(1-&gt;3)-[alpha-D-Man-(1-&gt;2)-alpha-D-Man-(1-&gt;6)]-alpha-D-Man-(1-&gt;6)]-beta-D-Man-(1-&gt;4)-beta-D-GlcNAc-(1-&gt;4)-alpha-D-GlcNAc-diphospho-di-trans,poly-cis-dolichol + a di-trans,poly-cis-dolichyl beta-D-glucosyl phosphate = a alpha-D-Glc-(1-&gt;2)-alpha-D-Glc-(1-&gt;3)-alpha-D-Glc-(1-&gt;3)-alpha-D-Man-(1-&gt;2)-alpha-D-Man-(1-&gt;2)-alpha-D-Man-(1-&gt;3)-[alpha-D-Man-(1-&gt;2)-alpha-D-Man-(1-&gt;3)-[alpha-D-Man-(1-&gt;2)-alpha-D-Man-(1-&gt;6)]-alpha-D-Man-(1-&gt;6)]-beta-D-Man-(1-&gt;4)-beta-D-GlcNAc-(1-&gt;4)-alpha-D-GlcNAc-diphospho-di-trans,poly-cis-dolichol + a di-trans,poly-cis-dolichyl phosphate + H(+). Its pathway is protein modification; protein glycosylation. In terms of biological role, dol-P-Glc:Glc(2)Man(9)GlcNAc(2)-PP-Dol alpha-1,2-glucosyltransferase that operates in the biosynthetic pathway of dolichol-linked oligosaccharides, the glycan precursors employed in protein asparagine (N)-glycosylation. The assembly of dolichol-linked oligosaccharides begins on the cytosolic side of the endoplasmic reticulum membrane and finishes in its lumen. The sequential addition of sugars to dolichol pyrophosphate produces dolichol-linked oligosaccharides containing fourteen sugars, including two GlcNAcs, nine mannoses and three glucoses. Once assembled, the oligosaccharide is transferred from the lipid to nascent proteins by oligosaccharyltransferases. In the lumen of the endoplasmic reticulum, adds the third and last glucose residue from dolichyl phosphate glucose (Dol-P-Glc) onto the lipid-linked oligosaccharide intermediate Glc(2)Man(9)GlcNAc(2)-PP-Dol to produce Glc(3)Man(9)GlcNAc(2)-PP-Dol. This is Dol-P-Glc:Glc(2)Man(9)GlcNAc(2)-PP-Dol alpha-1,2-glucosyltransferase (alg-10) from Neurospora crassa (strain ATCC 24698 / 74-OR23-1A / CBS 708.71 / DSM 1257 / FGSC 987).